Consider the following 329-residue polypeptide: 4-hydroxythreonine-4-phosphate dehydrogenase (329 aa).

Residues H136 and T137 each coordinate substrate. Residues H166, H211, and H266 each contribute to the a divalent metal cation site. Substrate contacts are provided by K274, N283, and R292.

This sequence belongs to the PdxA family. As to quaternary structure, homodimer. It depends on Zn(2+) as a cofactor. Mg(2+) is required as a cofactor. The cofactor is Co(2+).

The protein localises to the cytoplasm. It carries out the reaction 4-(phosphooxy)-L-threonine + NAD(+) = 3-amino-2-oxopropyl phosphate + CO2 + NADH. It functions in the pathway cofactor biosynthesis; pyridoxine 5'-phosphate biosynthesis; pyridoxine 5'-phosphate from D-erythrose 4-phosphate: step 4/5. Catalyzes the NAD(P)-dependent oxidation of 4-(phosphooxy)-L-threonine (HTP) into 2-amino-3-oxo-4-(phosphooxy)butyric acid which spontaneously decarboxylates to form 3-amino-2-oxopropyl phosphate (AHAP). This chain is 4-hydroxythreonine-4-phosphate dehydrogenase, found in Escherichia coli (strain 55989 / EAEC).